Reading from the N-terminus, the 407-residue chain is Na(+)-translocating NADH-quinone reductase subunit F (407 aa).

A helical transmembrane segment spans residues 6–26; it reads IFLAIGMFTAIVLGLVAIILV. The 2Fe-2S ferredoxin-type domain occupies 35-127; the sequence is GDVTIQINGE…DMQIRVPEEV (93 aa). The [2Fe-2S] cluster site is built by C70, C76, C79, and C111. An FAD-binding FR-type domain is found at 130–269; that stretch reads VKKWECTVES…YGPFGEFFAK (140 aa).

The protein belongs to the NqrF family. In terms of assembly, composed of six subunits; NqrA, NqrB, NqrC, NqrD, NqrE and NqrF. The cofactor is [2Fe-2S] cluster. It depends on FAD as a cofactor.

It localises to the cell inner membrane. The catalysed reaction is a ubiquinone + n Na(+)(in) + NADH + H(+) = a ubiquinol + n Na(+)(out) + NAD(+). NQR complex catalyzes the reduction of ubiquinone-1 to ubiquinol by two successive reactions, coupled with the transport of Na(+) ions from the cytoplasm to the periplasm. The first step is catalyzed by NqrF, which accepts electrons from NADH and reduces ubiquinone-1 to ubisemiquinone by a one-electron transfer pathway. This chain is Na(+)-translocating NADH-quinone reductase subunit F, found in Pseudomonas paraeruginosa (strain DSM 24068 / PA7) (Pseudomonas aeruginosa (strain PA7)).